The sequence spans 512 residues: Ribonuclease Y (512 aa).

Residues 3-23 (FQIILVVIISALVGLVIGFFI) form a helical membrane-spanning segment. In terms of domain architecture, KH spans 202–265 (TVAVIPLPND…EVARLALERL (64 aa)). The HD domain occupies 328 to 421 (VLKHSIEVCH…VQAADAISAA (94 aa)).

This sequence belongs to the RNase Y family.

The protein resides in the cell membrane. In terms of biological role, endoribonuclease that initiates mRNA decay. This chain is Ribonuclease Y, found in Desulforamulus reducens (strain ATCC BAA-1160 / DSM 100696 / MI-1) (Desulfotomaculum reducens).